The chain runs to 487 residues: Transmembrane protein 161B (487 aa).

Residue Asn-34 is glycosylated (N-linked (GlcNAc...) asparagine). The chain crosses the membrane as a helical span at residues 107 to 127 (LVDFTVAATVVYLVTEVYYNF). Asn-135 is a glycosylation site (N-linked (GlcNAc...) asparagine). 2 helical membrane passes run 136-156 (ISLVWCLLVLSFAIKVLFSLT) and 169-189 (SVCVTFGFFFFVKAMAVLIVT). N-linked (GlcNAc...) asparagine glycosylation occurs at Asn-203. 5 helical membrane-spanning segments follow: residues 228 to 248 (FKFFLAIFCSFIGAFLTFPGL), 265 to 285 (ITQTLLHINFLAPLFMVLLWV), 305 to 325 (LMTEATFDTLRLWLIILLCAL), 367 to 387 (VFYYLCVIALQYVAPLVMLLH), and 459 to 479 (LSFLTWWIAACLFSTSLFGLF).

This sequence belongs to the TMEM161 family.

The protein resides in the cell membrane. Essential for maintaining normal cardiac rhythm in the developing heart and for neonatal survival. Inhibits potassium and calcium currents in the cardiomyocytes, this assists in timely action potential repolarization and thereby maintains normal cardiac rhythm. This Homo sapiens (Human) protein is Transmembrane protein 161B (TMEM161B).